The sequence spans 361 residues: MSTAREQPIFSTRAHVFQIDPATKRNWIPAGKHALTVSYFYDATRNVYRIISIGGAKAIINSTVTPNMTFTKTSQKFGQWADSRANTVYGLGFASEQHLTQFAEKFQEVKEAARLAREKSQDGGELTSPALGLASHQVPPSPLVSANGPGEEKLFRSQSADAPGPTERERLKKMLSEGSVGEVQWEAEFFALQDSNNKLAGALREANAAAAQWRQQLEAQRAEAERLRQRVAELEAQAASEVTPTGEKEGLGQGQSLEQLEALVQTKDQEIQTLKSQTGGPREALEAAEREETQQKVQDLETRNAELEHQLRAMERSLEEARAERERARAEVGRAAQLLDVSLFELSELREGLARLAEAAP.

The tract at residues 1–80 (MSTAREQPIF…TKTSQKFGQW (80 aa)) is required for interaction with NFATC2. Positions 1–113 (MSTAREQPIF…EKFQEVKEAA (113 aa)) constitute a WH1 domain. The segment at 114 to 169 (RLAREKSQDGGELTSPALGLASHQVPPSPLVSANGPGEEKLFRSQSADAPGPTERE) is disordered. Phosphoserine occurs at positions 120 and 159. Coiled-coil stretches lie at residues 191 to 243 (ALQD…SEVT) and 254 to 358 (GQSL…RLAE).

Belongs to the Homer family. As to quaternary structure, tetramer. Isoform 1 and isoform 2 encode coiled-coil structures that mediate homo- and heteromultimerization. Interacts with NFATC2; interaction is calcium independent; interaction competes with PPP3CA for NFATC2 binding; interaction is reduced by AKT activation. Interacts with NFATC1 and NFATC4. Interacts with SHANK1; forms a high-order complex at least composed of SHANK1 and HOMER3; the complex formation is regulated by CAMK2A-mediated phosphorylation.

The protein resides in the cytoplasm. It is found in the postsynaptic density. The protein localises to the synapse. Postsynaptic density scaffolding protein. Binds and cross-links cytoplasmic regions of GRM1, GRM5, ITPR1, DNM3, RYR1, RYR2, SHANK1 and SHANK3. By physically linking GRM1 and GRM5 with ER-associated ITPR1 receptors, it aids the coupling of surface receptors to intracellular calcium release. Isoforms can be differently regulated and may play an important role in maintaining the plasticity at glutamatergic synapses. Negatively regulates T cell activation by inhibiting the calcineurin-NFAT pathway. Acts by competing with calcineurin/PPP3CA for NFAT protein binding, hence preventing NFAT activation by PPP3CA. This is Homer protein homolog 3 from Homo sapiens (Human).